Reading from the N-terminus, the 404-residue chain is MASSINNSSQPTVPSISNNSHGDSFVNEGPPSNFKNNSLTSSTHSSTDHVNVLPISQDKEMDISSPVKKQKASYSNKSPNKAPIQKSRGSSLKSHLETESQQTPVKRRRRKATIRNVDYCSACGGRGLFICCEGCPCSFHLSCLEPPLTPENIPEGSWFCVTCSIKSHHPPKHPLSIWSQLYDWIDSQNPSQYRLPDDLVHYFHGISRGDTGAYKETEGEMDTDEFSALPTGSSITNLAYCGYCSKPSMGACWVYGCQLCDTFYHKNCKEHAKKCSHDSIGKKGMRVPKNAVVIRTPLVLDTTSNTLNPKVMISGWQFLMGEFPSDELLYFPRLPVSCLYKVSEDGLIKDFLYAIGIEAKKFNNERKKRELEVIPPDVKSALLPARTHPNLPIALRTLFNKART.

Over residues 1-22 (MASSINNSSQPTVPSISNNSHG) the composition is skewed to polar residues. The tract at residues 1 to 110 (MASSINNSSQ…QQTPVKRRRR (110 aa)) is disordered. Thr-47 is subject to Phosphothreonine. Over residues 87–104 (SRGSSLKSHLETESQQTP) the composition is skewed to polar residues. Residues 117-166 (VDYCSACGGRGLFICCEGCPCSFHLSCLEPPLTPENIPEGSWFCVTCSIK) form a PHD-type zinc finger.

This is an uncharacterized protein from Schizosaccharomyces pombe (strain 972 / ATCC 24843) (Fission yeast).